A 373-amino-acid chain; its full sequence is D-amino-acid transaminase, chloroplastic (373 aa).

Residues M1–L57 constitute a chloroplast transit peptide. R128 serves as a coordination point for pyridoxal 5'-phosphate. K222 functions as the Proton acceptor in the catalytic mechanism. N6-(pyridoxal phosphate)lysine is present on K222. Pyridoxal 5'-phosphate is bound at residue E255.

Belongs to the class-IV pyridoxal-phosphate-dependent aminotransferase family. As to quaternary structure, homodimer. Pyridoxal 5'-phosphate is required as a cofactor.

Its subcellular location is the plastid. It is found in the chloroplast. It catalyses the reaction D-alanine + 2-oxoglutarate = D-glutamate + pyruvate. It carries out the reaction 4-amino-4-deoxychorismate = 4-aminobenzoate + pyruvate + H(+). It functions in the pathway cofactor biosynthesis; tetrahydrofolate biosynthesis; 4-aminobenzoate from chorismate: step 2/2. Its activity is regulated as follows. Inhibited by hydroxylamine or amino-oxyacetic acid. Amino acid aminotransferase showing activity for D-Asp and D-Ala as amino donors with 2-oxoglutarate as an amino acceptor. Can also use D-Met, D-Tyr, D-Phe, D-Gln, D-Trp and D-Asn as substrates, but no activity with L-Asp, L-Ala, L-Leu, L-Ile or L-Val. Also catalyzes the reverse reaction where an amino group is transferred from D-Glu to pyruvate or oxaloacetate to produce D-Ala or D-Asp, respectively. Also involved in folate biosynthesis, acting as an aminodeoxychorismate lyase converting 4-amino-4-deoxychorismate (ADC) to p-aminobenzoate (PABA). In Arabidopsis thaliana (Mouse-ear cress), this protein is D-amino-acid transaminase, chloroplastic.